Consider the following 37-residue polypeptide: MEALVYTFLLVSTLGIIFFAIFFREPPKVPVPTKKAK.

Residues 3–23 (ALVYTFLLVSTLGIIFFAIFF) form a helical membrane-spanning segment.

Belongs to the PsbT family. In terms of assembly, PSII is composed of 1 copy each of membrane proteins PsbA, PsbB, PsbC, PsbD, PsbE, PsbF, PsbH, PsbI, PsbJ, PsbK, PsbL, PsbM, PsbT, PsbY, PsbZ, Psb30/Ycf12, at least 3 peripheral proteins of the oxygen-evolving complex and a large number of cofactors. It forms dimeric complexes.

The protein resides in the plastid. It is found in the chloroplast thylakoid membrane. Found at the monomer-monomer interface of the photosystem II (PS II) dimer, plays a role in assembly and dimerization of PSII. PSII is a light-driven water plastoquinone oxidoreductase, using light energy to abstract electrons from H(2)O, generating a proton gradient subsequently used for ATP formation. The polypeptide is Photosystem II reaction center protein T (Cucumis sativus (Cucumber)).